A 124-amino-acid polypeptide reads, in one-letter code: Sulfiredoxin (124 aa).

It belongs to the sulfiredoxin family. As to quaternary structure, interacts with tpx1 in response to oxidative stress.

It is found in the cytoplasm. Its subcellular location is the nucleus. It carries out the reaction S-hydroxy-S-oxy-L-cysteinyl-[peroxiredoxin] + [protein]-dithiol + ATP = S-hydroxy-L-cysteinyl-[peroxiredoxin] + [protein]-disulfide + ADP + phosphate. Contributes to oxidative stress resistance by reducing cysteine-sulfinic acid formed under exposure to oxidants in a peroxiredoxin. May catalyze the reduction in a multi-step process by acting both as a specific phosphotransferase and a thioltransferase. This is Sulfiredoxin (srx1) from Schizosaccharomyces pombe (strain 972 / ATCC 24843) (Fission yeast).